The primary structure comprises 208 residues: Uracil phosphoribosyltransferase (208 aa).

5-phospho-alpha-D-ribose 1-diphosphate is bound by residues arginine 78, arginine 103, and 130-138 (DPMLATGGS). Residues isoleucine 193 and 198 to 200 (GDA) each bind uracil. A 5-phospho-alpha-D-ribose 1-diphosphate-binding site is contributed by aspartate 199.

This sequence belongs to the UPRTase family. Mg(2+) serves as cofactor.

The enzyme catalyses UMP + diphosphate = 5-phospho-alpha-D-ribose 1-diphosphate + uracil. Its pathway is pyrimidine metabolism; UMP biosynthesis via salvage pathway; UMP from uracil: step 1/1. Allosterically activated by GTP. Catalyzes the conversion of uracil and 5-phospho-alpha-D-ribose 1-diphosphate (PRPP) to UMP and diphosphate. The polypeptide is Uracil phosphoribosyltransferase (Neisseria meningitidis serogroup A / serotype 4A (strain DSM 15465 / Z2491)).